A 192-amino-acid chain; its full sequence is Amelogenin, Y isoform (192 aa).

The first 16 residues, 1–16 (MGTWILFACLLGAAYS), serve as a signal peptide directing secretion. The interval 73–192 (QSPQNHALQP…TDKTKREEVD (120 aa)) is disordered. The segment covering 87 to 105 (PMVPAQQPVVPQQPMMPVP) has biased composition (low complexity). Residues 108 to 117 (HSMTPIQHHQ) show a composition bias toward polar residues. Residues 132 to 173 (PIQPQPHQPLQPQPPVHPIQRLPPQPPLPPIFPMQPLPPVLP) are compositionally biased toward pro residues.

This sequence belongs to the amelogenin family.

It is found in the secreted. It localises to the extracellular space. The protein localises to the extracellular matrix. In terms of biological role, plays a role in the biomineralization of teeth. Seems to regulate the formation of crystallites during the secretory stage of tooth enamel development. Thought to play a major role in the structural organization and mineralization of developing enamel. The chain is Amelogenin, Y isoform (AMELY) from Bos taurus (Bovine).